Reading from the N-terminus, the 613-residue chain is Phostensin (613 aa).

The span at 18 to 33 (EEASVRGREKAERERL) shows a compositional bias: basic and acidic residues. Disordered stretches follow at residues 18-231 (EEAS…SAYQ) and 266-500 (GEER…AVPG). Phosphoserine occurs at positions 54, 125, 133, 175, and 195. 2 stretches are compositionally biased toward basic and acidic residues: residues 104 to 154 (RSEE…ERRL) and 167 to 191 (LEARDWRQSPGEVGDRSSRLSEAWK). Position 199 is a phosphothreonine (threonine 199). Positions 199–221 (TPERSLRLAESREQSPRRKEVES) are enriched in basic and acidic residues. A Phosphoserine modification is found at serine 224. The span at 266–282 (GEERQDYSEECGRKEEW) shows a compositional bias: basic and acidic residues. Over residues 295-309 (LSETLTREAQGNSSA) the composition is skewed to polar residues. Basic and acidic residues-rich tracts occupy residues 314-327 (AEQRPVEDGERGMK), 340-350 (KAREWTPRDIE), and 357-366 (EPPESAEKLL). A phosphoserine mark is found at serine 368 and serine 432. Over residues 424 to 446 (QPPPPAPLSPPPPAPTAPQPPGD) the composition is skewed to pro residues. Lysine 457 is modified (N6-acetyllysine). Residues 476 to 499 (PRRSVPPATPATPTSPATVDAAVP) show a composition bias toward low complexity. 2 positions are modified to phosphoserine: serine 490 and serine 530. Positions 552-595 (QYPSESSVLEELGPEPEVPSAPNPPAAQPDDEEDEEELLLLQPE) are disordered. Over residues 567–578 (PEVPSAPNPPAA) the composition is skewed to pro residues. Acidic residues predominate over residues 580–589 (PDDEEDEEEL).

In terms of assembly, interacts with Protein phosphatase 1 (PP1). Isoform 4 is predominantly expressed in leukocytes and spleen.

It is found in the cytoplasm. Its subcellular location is the cytoskeleton. In terms of biological role, may target protein phosphatase 1 to F-actin cytoskeleton. The protein is Phostensin (PPP1R18) of Homo sapiens (Human).